A 258-amino-acid polypeptide reads, in one-letter code: MVLIRVLANLLILQLSYAQRSSELVIGGDECNINEHRFLVALYKSGRFRCGGTLINQEWVLTAAHCDRRNMEIKLGMHSKNVPNEDEQRRVPKEKFFCDSNKNYTQWNKDIMLIRLNSPVNNSTHIAPLSLPSNPPIVGSVCRIMGWGTITSPNETYPDVPHCANINLFNYTVCHGAHAGLPATSRTLCAGVLEGGKDTCKGDSGGPLICNGQFQGFVSWGGDPCAQPREPGVYTKVFDHLDWIQNIIAGNTTATCPL.

The first 18 residues, 1–18, serve as a signal peptide directing secretion; that stretch reads MVLIRVLANLLILQLSYA. Positions 19 to 24 are excised as a propeptide; sequence QRSSEL. The region spanning 25–249 is the Peptidase S1 domain; that stretch reads VIGGDECNIN…HLDWIQNIIA (225 aa). 6 cysteine pairs are disulfide-bonded: Cys-31–Cys-163, Cys-50–Cys-66, Cys-98–Cys-256, Cys-142–Cys-210, Cys-174–Cys-189, and Cys-200–Cys-225. The active-site Charge relay system is the His-65. N-linked (GlcNAc...) asparagine glycosylation is present at Asn-103. Asp-110 (charge relay system) is an active-site residue. N-linked (GlcNAc...) asparagine glycans are attached at residues Asn-121, Asn-122, Asn-154, and Asn-170. Catalysis depends on Ser-204, which acts as the Charge relay system. Asn-251 carries an N-linked (GlcNAc...) asparagine glycan.

Belongs to the peptidase S1 family. Snake venom subfamily. Monomer. As to expression, expressed by the venom gland.

The protein resides in the secreted. Functionally, snake venom serine protease that may act in the hemostasis system of the prey. This is Snake venom serine protease KN12 from Trimeresurus stejnegeri (Chinese green tree viper).